We begin with the raw amino-acid sequence, 417 residues long: Serine hydroxymethyltransferase (417 aa).

(6S)-5,6,7,8-tetrahydrofolate is bound by residues L121 and 125–127 (GHL). At K229 the chain carries N6-(pyridoxal phosphate)lysine. Position 355–357 (355–357 (SPF)) interacts with (6S)-5,6,7,8-tetrahydrofolate.

It belongs to the SHMT family. Homodimer. Requires pyridoxal 5'-phosphate as cofactor.

The protein localises to the cytoplasm. The catalysed reaction is (6R)-5,10-methylene-5,6,7,8-tetrahydrofolate + glycine + H2O = (6S)-5,6,7,8-tetrahydrofolate + L-serine. It functions in the pathway one-carbon metabolism; tetrahydrofolate interconversion. The protein operates within amino-acid biosynthesis; glycine biosynthesis; glycine from L-serine: step 1/1. Catalyzes the reversible interconversion of serine and glycine with tetrahydrofolate (THF) serving as the one-carbon carrier. This reaction serves as the major source of one-carbon groups required for the biosynthesis of purines, thymidylate, methionine, and other important biomolecules. Also exhibits THF-independent aldolase activity toward beta-hydroxyamino acids, producing glycine and aldehydes, via a retro-aldol mechanism. The protein is Serine hydroxymethyltransferase of Shewanella frigidimarina (strain NCIMB 400).